The chain runs to 146 residues: MALKVELKPHERIIVGNSVITNTDQRARLLIDGENVPILRERDILTPETANTPAKLVYLAVQLMYISPDPQTQHGTYFNLVRDIVTAVPSSWPIIEAINNNILNGDLYRALKDARKLIAYEEKLRGQYEATHPKAEADKDDVSTAA.

Belongs to the FlbT family.

Has a post-transcriptional repressor function in flagellum biogenesis. Associates with the 5'-UTR of fljK mRNA and promotes its degradation. In Bradyrhizobium diazoefficiens (strain JCM 10833 / BCRC 13528 / IAM 13628 / NBRC 14792 / USDA 110), this protein is Probable flagellum biosynthesis repressor protein FlbT 1.